The chain runs to 330 residues: 7,8-didemethyl-8-hydroxy-5-deazariboflavin synthase (330 aa).

The Radical SAM core domain maps to 13–253; it reads VTFSKNAFIP…EDISIQVPPN (241 aa). Positions 27, 31, and 34 each coordinate [4Fe-4S] cluster.

This sequence belongs to the radical SAM superfamily. CofG family. Consists of two subunits, CofG and CofH. The cofactor is [4Fe-4S] cluster.

It catalyses the reaction 5-amino-5-(4-hydroxybenzyl)-6-(D-ribitylimino)-5,6-dihydrouracil + S-adenosyl-L-methionine = 7,8-didemethyl-8-hydroxy-5-deazariboflavin + 5'-deoxyadenosine + L-methionine + NH4(+) + H(+). The protein operates within cofactor biosynthesis; coenzyme F0 biosynthesis. Catalyzes the radical-mediated synthesis of 7,8-didemethyl-8-hydroxy-5-deazariboflavin from 5-amino-5-(4-hydroxybenzyl)-6-(D-ribitylimino)-5,6-dihydrouracil. In Methanococcus maripaludis (strain DSM 14266 / JCM 13030 / NBRC 101832 / S2 / LL), this protein is 7,8-didemethyl-8-hydroxy-5-deazariboflavin synthase.